A 190-amino-acid polypeptide reads, in one-letter code: Translation machinery-associated protein 22 (190 aa).

The interval 63 to 83 (LNVSGTKDSNAEEQPAKLTKE) is disordered. An SUI1 domain is found at 99-170 (VLIKTIERTK…DIFDFILEKF (72 aa)).

The protein belongs to the DENR family. Interacts with the 40S ribosomal subunit.

The protein resides in the cytoplasm. The polypeptide is Translation machinery-associated protein 22 (tma22) (Schizosaccharomyces pombe (strain 972 / ATCC 24843) (Fission yeast)).